Here is a 274-residue protein sequence, read N- to C-terminus: Glutamate racemase (274 aa).

Substrate is bound by residues 9–10 (DS) and 41–42 (YG). Catalysis depends on Cys-73, which acts as the Proton donor/acceptor. Residue 74–75 (NT) coordinates substrate. The active-site Proton donor/acceptor is Cys-183. 184-185 (TH) lines the substrate pocket.

It belongs to the aspartate/glutamate racemases family.

It catalyses the reaction L-glutamate = D-glutamate. Its pathway is cell wall biogenesis; peptidoglycan biosynthesis. Functionally, provides the (R)-glutamate required for cell wall biosynthesis. The sequence is that of Glutamate racemase from Shewanella baltica (strain OS185).